Reading from the N-terminus, the 308-residue chain is Taste receptor type 2 member 107 (308 aa).

Residues 1–7 lie on the Extracellular side of the membrane; that stretch reads MLSAAEG. Residues 8–28 form a helical membrane-spanning segment; sequence ILLCVVTSEAVLGVLGDTFIA. Residues 29–43 are Cytoplasmic-facing; it reads LANCMEYAKNKKLSK. A helical transmembrane segment spans residues 44 to 64; sequence IGFILIGLAISRIGVVWIIIL. Topologically, residues 65–94 are extracellular; sequence QGYMQVFFPHILTFGNITEYITYIWVFLNH. Asn80 carries an N-linked (GlcNAc...) asparagine glycan. The chain crosses the membrane as a helical span at residues 95-115; that stretch reads LSVWFATNLNILYFLKIANFS. Over 116 to 127 the chain is Cytoplasmic; the sequence is NSVFLWLKSRVR. A helical membrane pass occupies residues 128-148; it reads VVFIFLSGCLLTSWLLCFPQF. At 149–180 the chain is on the extracellular side; that stretch reads SKMLNNSKMYWGNTSWLQQQKNVFLINQSLTN. 3 N-linked (GlcNAc...) asparagine glycosylation sites follow: Asn153, Asn161, and Asn175. A helical membrane pass occupies residues 181 to 201; sequence LGIFFFIIVSLITCFLLIVFL. Residues 202–232 lie on the Cytoplasmic side of the membrane; that stretch reads WRHIRQMHSDGSGLRDLNTEAHVKAMRVLIS. The helical transmembrane segment at 233 to 253 threads the bilayer; the sequence is FAVLFILHFVGLSIQVLCFFL. The Extracellular portion of the chain corresponds to 254 to 258; it reads PQNNL. The helical transmembrane segment at 259 to 279 threads the bilayer; that stretch reads LFITGLIATCLYPCGHSIILI. Topologically, residues 280–308 are cytoplasmic; that stretch reads LGNKQLKQASLKALQHLTCCETKRNLSVT.

Belongs to the G-protein coupled receptor T2R family.

It is found in the membrane. Putative taste receptor which may play a role in the perception of bitterness. This chain is Taste receptor type 2 member 107, found in Rattus norvegicus (Rat).